A 154-amino-acid chain; its full sequence is 3-hydroxyacyl-[acyl-carrier-protein] dehydratase FabZ (154 aa).

Residue H55 is part of the active site.

It belongs to the thioester dehydratase family. FabZ subfamily.

The protein localises to the cytoplasm. It catalyses the reaction a (3R)-hydroxyacyl-[ACP] = a (2E)-enoyl-[ACP] + H2O. Its function is as follows. Involved in unsaturated fatty acids biosynthesis. Catalyzes the dehydration of short chain beta-hydroxyacyl-ACPs and long chain saturated and unsaturated beta-hydroxyacyl-ACPs. The protein is 3-hydroxyacyl-[acyl-carrier-protein] dehydratase FabZ of Oleidesulfovibrio alaskensis (strain ATCC BAA-1058 / DSM 17464 / G20) (Desulfovibrio alaskensis).